Here is a 637-residue protein sequence, read N- to C-terminus: Threonine--tRNA ligase (637 aa).

In terms of domain architecture, TGS spans 1–61 (MLNITLPDGS…TEDSSVQIIT (61 aa)). A catalytic region spans residues 242–533 (DHRKLGKQLD…LIENHAGSFP (292 aa)). Cys333, His384, and His510 together coordinate Zn(2+).

This sequence belongs to the class-II aminoacyl-tRNA synthetase family. Homodimer. Zn(2+) serves as cofactor.

It is found in the cytoplasm. The enzyme catalyses tRNA(Thr) + L-threonine + ATP = L-threonyl-tRNA(Thr) + AMP + diphosphate + H(+). Catalyzes the attachment of threonine to tRNA(Thr) in a two-step reaction: L-threonine is first activated by ATP to form Thr-AMP and then transferred to the acceptor end of tRNA(Thr). Also edits incorrectly charged L-seryl-tRNA(Thr). The protein is Threonine--tRNA ligase of Neisseria meningitidis serogroup C (strain 053442).